Reading from the N-terminus, the 180-residue chain is UPF0227 protein CKO_01948 (180 aa).

This sequence belongs to the UPF0227 family.

The polypeptide is UPF0227 protein CKO_01948 (Citrobacter koseri (strain ATCC BAA-895 / CDC 4225-83 / SGSC4696)).